The sequence spans 1663 residues: MATDGASCEPDLSRAPEDAAGAAAEAAKKEFDVDTLSKSELRMLLSVMEGELEARDLVIEALRARRKEVFIQERYGRFNLNDPFLALQRDYEAGAGDKEKKPVCTNPLSILEAVMAHCKKMQERMSAQLAAAESRQKKLEMEKLQLQALEQEHKKLAARLEEERGKNKQVVLMLVKECKQLSGKVIEEAQKLEDVMAKLEEEKKKTNELEEELSTEKRRSTEMEAQMEKQLSEFDTEREQLRAKLNREEAHTTDLKEEIDKMKKMIEQLKRGSDSKPSLSLPRKTKDRRLVSISVGTEGTVTRSVACQTDLVTESADYMKKLPLTMPVKPSTGSPLVSANAKGSVCTSATMARPGIDRQASHGDLIGASVPAFPPPSANKIEENGPSTGSTPDPTSSTPPLPSNAAPPTAQTPGIAPQNSQAPPMHSLHSPCANTSLHPGLNPRIQAARFRFQGNANDPDQNGNTTQSPPSRDVSPTSRDNLVAKQLARNTVTQALSRFTSPQAGAPSRPGVPPTGDVGTHPPVGRTSLKTHAVARVDRGNPPPIPPKKPGLSQTPSPPHPQLKVIIDSSRASNTGAKVDNKTVASPPSSLPQGNRVINEENLPKSSSPQLPPKPSIDLTVAPAGCAVSALATSQVGAWPAATPGLSQPACSDSSLVIPTTIAFCSSINPVSASSCRPGASDSLLVTASGWSPSLTPLLMSGGPAPLAGRPTLLQQAAAQGNVTLLSMLLNEEGLDINYSCEDGHSALYSAAKNGHTDCVRLLLSAEAQVNAADKNGFTPLCAAAAQGHFECVELLIAYDANINHAADGGQTPLYLACKNGNKECVKLLLEAGTNRSVKTTDGWTPVHAAVDTGNVDSLKLLMYHRIPARGNSFNEEESESSVFDLDGGEDSPEGISKPVIPADLINHANREGWTAAHIAASKGFKNCLEILCRHRGLEPERRDKCNRTVHDVATDDCKHLLENLNALKIPLRISVGEIEPSNYGSDDLECENTICALNIRKQTSWDDFSKAVSQALTNHFQAISSDGWWSLEDVTCNNTTDSNIGLSARSIRSITLGNVLWSVGQSFVQSPWDFMRKNKAEHITVLLSGPLEGCLSSVTYASMIPLQMMQNYLRLVEQYHNVIFHGPEGSLQDYIVHQLALCLKHRQMAAGFSCEIVRAEVDARFSKEQLLDLFISSACLIPVKQSPSKKKIIIILENLEKSSLSELLRDFLAPLENRSTESPCTFQKGNGISECYYFHENCFLMGTIAKACLQGSDLLVQQHFRWVQLRWDGEPMQGLLQRFLRRKVVNKFKGQAPSPCDPVCKIVDWALSVWRQLNSCLARLGTPEALLGPKYFLSCPVVPGHAQVTVKWMSKLWNGVIAPRVQEAILSRASVKRQPGFGQTTAKRHPSQGQQAVIKAALSILLNKAVLHGCPLPRAELDQHTADFKGGSFPLSIVSSYNSCNKKKGESGAWRKVNTSPRRKSGRFSLPTWNKPDLSTEGMKNKTVSQLNCNRSASLSKQKSLENDLSLTLNLDQRLSLGSDDEADLVKELQSMCSSKSESDISKIADSRDDLRMFDSSGNNPVLSATINNLRMPVSQKEVSPLSSHQTTECSNSKSKTELGVSRVKSFLPVPRSKVTQCSQNTKRSSSSSNTRQIEINNNSKEENWNLHKNEHLEKPNK.

5 disordered regions span residues 1–23 (MATDGASCEPDLSRAPEDAAGAA), 203–222 (KKKTNELEEELSTEKRRSTE), 359–440 (QASH…LHPG), 454–478 (GNANDPDQNGNTTQSPPSRDVSPTS), and 498–617 (RFTS…KPSI). Positions 119–276 (KKMQERMSAQ…EQLKRGSDSK (158 aa)) form a coiled coil. Positions 386-396 (PSTGSTPDPTS) are enriched in low complexity. Arginine 498 carries the asymmetric dimethylarginine modification. Residues 583-593 (TVASPPSSLPQ) are compositionally biased toward polar residues. ANK repeat units lie at residues 709–739 (GRPTLLQQAAAQGNVTLLSMLLNEEGLDINY), 743–772 (DGHSALYSAAKNGHTDCVRLLLSAEAQVNA), 776–805 (NGFTPLCAAAAQGHFECVELLIAYDANINH), 809–838 (GGQTPLYLACKNGNKECVKLLLEAGTNRSV), 842–871 (DGWTPVHAAVDTGNVDSLKLLMYHRIPARG), and 912–942 (EGWTAAHIAASKGFKNCLEILCRHRGLEPER). Positions 1446-1485 (NKKKGESGAWRKVNTSPRRKSGRFSLPTWNKPDLSTEGMK) are disordered. A Phosphoserine modification is found at serine 1524. A disordered region spans residues 1580–1663 (SQKEVSPLSS…KNEHLEKPNK (84 aa)). Polar residues predominate over residues 1582-1599 (KEVSPLSSHQTTECSNSK). The segment covering 1624 to 1638 (SQNTKRSSSSSNTRQ) has biased composition (low complexity). Residues 1645–1663 (SKEENWNLHKNEHLEKPNK) show a composition bias toward basic and acidic residues.

As to quaternary structure, interacts with CTTN/cortactin SH3 domain. Interacts with STRN, STRN4/zinedin and MOB4/phocein; this interactions mediate the association with the STRIPAK core complex and may regulate dendritic spine distribution of the STRIPAK complex in hippocampal neurons. Activation of glutamate receptors weakens the interaction with STRN and STRN4.

It localises to the cytoplasm. The protein localises to the cell cortex. Its subcellular location is the cell projection. The protein resides in the dendritic spine. In terms of biological role, regulates the dendritic spine distribution of CTTN/cortactin in hippocampal neurons, and thus controls dendritic spinogenesis and dendritic spine maintenance. Associates with the striatin-interacting phosphatase and kinase (STRIPAK) core complex to regulate dendritic spine distribution of the STRIPAK complex in hippocampal neurons. This chain is Cortactin-binding protein 2 (CTTNBP2), found in Pongo abelii (Sumatran orangutan).